The primary structure comprises 432 residues: Enolase (432 aa).

Glutamine 167 is a binding site for (2R)-2-phosphoglycerate. The active-site Proton donor is glutamate 209. Residues aspartate 246, glutamate 290, and aspartate 317 each contribute to the Mg(2+) site. Residues lysine 342, arginine 371, serine 372, and lysine 393 each contribute to the (2R)-2-phosphoglycerate site. Lysine 342 serves as the catalytic Proton acceptor.

It belongs to the enolase family. In terms of assembly, component of the RNA degradosome, a multiprotein complex involved in RNA processing and mRNA degradation. Mg(2+) is required as a cofactor.

Its subcellular location is the cytoplasm. It localises to the secreted. The protein localises to the cell surface. The catalysed reaction is (2R)-2-phosphoglycerate = phosphoenolpyruvate + H2O. The protein operates within carbohydrate degradation; glycolysis; pyruvate from D-glyceraldehyde 3-phosphate: step 4/5. Functionally, catalyzes the reversible conversion of 2-phosphoglycerate (2-PG) into phosphoenolpyruvate (PEP). It is essential for the degradation of carbohydrates via glycolysis. This is Enolase from Cronobacter sakazakii (strain ATCC BAA-894) (Enterobacter sakazakii).